Consider the following 293-residue polypeptide: Ribosomal protein L11 methyltransferase (293 aa).

Positions 145, 166, 188, and 230 each coordinate S-adenosyl-L-methionine.

It belongs to the methyltransferase superfamily. PrmA family.

Its subcellular location is the cytoplasm. The catalysed reaction is L-lysyl-[protein] + 3 S-adenosyl-L-methionine = N(6),N(6),N(6)-trimethyl-L-lysyl-[protein] + 3 S-adenosyl-L-homocysteine + 3 H(+). Its function is as follows. Methylates ribosomal protein L11. The sequence is that of Ribosomal protein L11 methyltransferase from Shewanella sp. (strain ANA-3).